The primary structure comprises 233 residues: tRNA (guanine-N(7)-)-methyltransferase (233 aa).

The tract at residues 1-23 (MSPQDRPSRTTEAFFGRRRGKPV) is disordered. The S-adenosyl-L-methionine site is built by glutamate 64, glutamate 89, aspartate 116, and aspartate 138. Aspartate 138 is an active-site residue. Substrate is bound by residues lysine 142, aspartate 174, and 212-215 (TRYE).

The protein belongs to the class I-like SAM-binding methyltransferase superfamily. TrmB family.

It carries out the reaction guanosine(46) in tRNA + S-adenosyl-L-methionine = N(7)-methylguanosine(46) in tRNA + S-adenosyl-L-homocysteine. Its pathway is tRNA modification; N(7)-methylguanine-tRNA biosynthesis. Functionally, catalyzes the formation of N(7)-methylguanine at position 46 (m7G46) in tRNA. This chain is tRNA (guanine-N(7)-)-methyltransferase, found in Mesorhizobium japonicum (strain LMG 29417 / CECT 9101 / MAFF 303099) (Mesorhizobium loti (strain MAFF 303099)).